The sequence spans 1403 residues: MRRGAAWALLLAAALGLGARGVRAAVALADFYPFGTKRGDAVTPKQDDGGSGLQPLSVPFPFFGAEHSGLYVNNNGIISFLKEVSQFTPVAFPIAKDRCVVAAFWADVDNRRAGDVYYREATDAAMLNRATEDIRRYFPELPDFSATWVFVATWYRVTFFGGSSSSPVNTFQTVLITDGRFSFTIFNYESILWTTGTHASSGGDADGLGGIAAQAGFNAGDGHRYFNIPGSRTADMAEVETTTNVGVPGRWAFRIDDAQVRVGGCGHTTSVCLVLRPCLNGGKCIDDCVTGNPSYTCSCLAGFTGRRCHLDVNECASHPCQNGGTCTHGVNSFSCQCPAGFQGPTCESAQSPCDNKVCQNGGQCQAESSSAVCVCQAGYTGATCETDVDECSSDPCLNGGSCVDLVGNYSCICVEPFEGPQCETGSYVVPSPCLSNPCLNGGTCVDADQGYVCECPEGFMGLDCRERILNDCDCRNGGRCLGANTTICQCPPGFFGLLCEFEVTATPCNMNTQCPDGGYCMEYGGSYLCVCHTDHNISHSLPSPCDSDPCFNGGSCDAHEDSYTCECPRGFHGRHCEKARPHLCSSGPCRNGGTCKETGDEYRCTCPYRFTGRHCEIGKPDSCASGPCHNGGTCFHYIGKYKCDCPPGFSGRHCEIAPSPCFRSPCMNGGICEDLGTDFSCHCQPGYTGHRCQAEVDCGQPEEVKHATMRLNGTRMGSVALYTCDPGFSLSVLSHMRVCQPQGVWSQPPQCIEVDECQSQPCLHKGSCQDLIAGYQCLCSPGYEGVHCELETDECQAQPCRNGGSCRDLPGAFICQCPEGFVGTHCETEVDACASSPCQHGGRCEDGGGAYLCVCPEGFFGYNCETVSDPCFSSPCGGRGYCLASNGSHSCTCKVGYTGKDCTKELLPPTALRVERVEESGVSISWSPPEGTTARQVLDGYAVTYASSDGSSRRTDFVDRSRSSHQLRALAAGRAYNISVFSVKRNTNNKNDISRPAALLTRTRPRPIEDFEVTNISANAISVQWALHRIQHATVSRVRVSVLYPEDTVVQSTEVDRSVDRLTFGDLLPGRRYSVRLTTLSGPGGAEYPTESLASAPLNVWTRPLPPANLTASRVTATSAHMVWDPPTPGISLEAYVINVTTSQNTKSRYIPNGKLVSYTVRDLMPGRRYQLSVTAVQSTEQGQLHSEPAHLYIITSPRDGTDRRWHQGGHHSRMLRNRPAPLRLPELRLLNDHGAPETPTQPPRFSELVDGRARVSARFGGLPSRAVTVRSQPTTPVPLKNTEAPEQARLALQLPKNNSKDTESTPGSCSEDTCQNGGTCVPGANAHSCDCRPGFKGRHCELACEKVPRPCTRLFSETKSFPVWEGDVCHHVYKKVYKVHQDVCFKERCQSTSLKKLKQESN.

The N-terminal stretch at 1–24 (MRRGAAWALLLAAALGLGARGVRA) is a signal peptide. Residues 103–258 (AFWADVDNRR…GRWAFRIDDA (156 aa)) form the NIDO domain. 3 EGF-like domains span residues 268–309 (TTSV…RRCH), 311–347 (DVNE…PTCE), and 349–385 (AQSP…ATCE). 18 cysteine pairs are disulfide-bonded: cysteine 272–cysteine 284, cysteine 278–cysteine 297, cysteine 299–cysteine 308, cysteine 315–cysteine 326, cysteine 320–cysteine 335, cysteine 337–cysteine 346, cysteine 353–cysteine 364, cysteine 358–cysteine 373, cysteine 375–cysteine 384, cysteine 391–cysteine 402, cysteine 396–cysteine 411, cysteine 413–cysteine 422, cysteine 433–cysteine 444, cysteine 438–cysteine 453, cysteine 455–cysteine 464, cysteine 472–cysteine 480, cysteine 474–cysteine 488, and cysteine 490–cysteine 499. The N-linked (GlcNAc...) asparagine glycan is linked to asparagine 292. Residues 387 to 423 (DVDECSSDPCLNGGSCVDLVGNYSCICVEPFEGPQCE) enclose the EGF-like 4; calcium-binding domain. The N-linked (GlcNAc...) asparagine glycan is linked to asparagine 408. 2 EGF-like domains span residues 429–465 (VPSP…LDCR) and 468–500 (ILND…LLCE). Asparagine 484 is a glycosylation site (N-linked (GlcNAc...) asparagine). Asparagine 536 carries an N-linked (GlcNAc...) asparagine glycan. EGF-like domains are found at residues 541-577 (LPSP…RHCE), 580-616 (RPHL…RHCE), 619-655 (KPDS…RHCE), and 657-693 (APSP…HRCQ). 26 disulfide bridges follow: cysteine 545–cysteine 556, cysteine 550–cysteine 565, cysteine 567–cysteine 576, cysteine 584–cysteine 595, cysteine 589–cysteine 604, cysteine 606–cysteine 615, cysteine 623–cysteine 634, cysteine 628–cysteine 643, cysteine 645–cysteine 654, cysteine 661–cysteine 672, cysteine 666–cysteine 681, cysteine 683–cysteine 692, cysteine 698–cysteine 739, cysteine 724–cysteine 751, cysteine 757–cysteine 768, cysteine 762–cysteine 777, cysteine 779–cysteine 788, cysteine 795–cysteine 806, cysteine 800–cysteine 815, cysteine 817–cysteine 826, cysteine 833–cysteine 844, cysteine 838–cysteine 853, cysteine 855–cysteine 864, cysteine 871–cysteine 882, cysteine 876–cysteine 891, and cysteine 893–cysteine 902. The Sushi domain occupies 696 to 753 (VDCGQPEEVKHATMRLNGTRMGSVALYTCDPGFSLSVLSHMRVCQPQGVWSQPPQCIE). Residue asparagine 712 is glycosylated (N-linked (GlcNAc...) asparagine). The EGF-like 11; calcium-binding domain occupies 753 to 789 (EVDECQSQPCLHKGSCQDLIAGYQCLCSPGYEGVHCE). The region spanning 791–827 (ETDECQAQPCRNGGSCRDLPGAFICQCPEGFVGTHCE) is the EGF-like 12; calcium-binding domain. EGF-like domains lie at 829–865 (EVDA…YNCE) and 867–903 (VSDP…KDCT). N-linked (GlcNAc...) asparagine glycosylation occurs at asparagine 886. Fibronectin type-III domains lie at 908–1006 (PPTA…TRPR), 1007–1105 (PIED…TRPL), and 1106–1200 (PPAN…SPRD). Asparagine 977, asparagine 1015, asparagine 1109, asparagine 1139, and asparagine 1298 each carry an N-linked (GlcNAc...) asparagine glycan. The disordered stretch occupies residues 1295 to 1314 (LPKNNSKDTESTPGSCSEDT). Over residues 1305–1314 (STPGSCSEDT) the composition is skewed to polar residues. One can recognise an EGF-like 15 domain in the interval 1306–1342 (TPGSCSEDTCQNGGTCVPGANAHSCDCRPGFKGRHCE). Intrachain disulfides connect cysteine 1310–cysteine 1321, cysteine 1315–cysteine 1330, and cysteine 1332–cysteine 1341.

Post-translationally, phosphorylated on serine and threonine residues. N-glycosylated. As to expression, expressed in liver.

It is found in the secreted. It localises to the extracellular space. Its subcellular location is the extracellular matrix. This chain is Sushi, nidogen and EGF-like domain-containing protein 1, found in Rattus norvegicus (Rat).